The primary structure comprises 174 residues: Disulfide bond formation protein B (174 aa).

Residues 1-14 are Cytoplasmic-facing; the sequence is MLHIFYIYSKSRKF. The chain crosses the membrane as a helical span at residues 15–31; that stretch reads WAILICSSISLISIALL. Residues 32–49 lie on the Periplasmic side of the membrane; it reads NQFFFLLKPCILCIYQRC. A disulfide bridge links Cys41 with Cys44. The helical transmembrane segment at 50–65 threads the bilayer; sequence SLFGITIAGLIALISP. Residues 66-72 lie on the Cytoplasmic side of the membrane; sequence KTTLLRL. Residues 73-90 traverse the membrane as a helical segment; the sequence is FSIFIWLYSAIKGLYFSN. At 91 to 146 the chain is on the periplasmic side; it reads IHMQTTLHPSSSLTCDLFVSFPNWLPLNKWYPIIFDSKISNCYSYPQYLLYLEISQ. Cys105 and Cys132 are disulfide-bonded. A helical membrane pass occupies residues 147–165; that stretch reads WMLLFFLIYLIIAIFTIIS. The Cytoplasmic portion of the chain corresponds to 166-174; that stretch reads QCHNLFQKK.

The protein belongs to the DsbB family.

The protein localises to the cell inner membrane. Its function is as follows. Required for disulfide bond formation in some periplasmic proteins. Acts by oxidizing the DsbA protein. The polypeptide is Disulfide bond formation protein B (Blochmanniella floridana).